We begin with the raw amino-acid sequence, 95 residues long: Small ribosomal subunit protein uS19 (95 aa).

This sequence belongs to the universal ribosomal protein uS19 family.

Functionally, protein S19 forms a complex with S13 that binds strongly to the 16S ribosomal RNA. The sequence is that of Small ribosomal subunit protein uS19 from Thermotoga sp. (strain RQ2).